Consider the following 354-residue polypeptide: Chorismate synthase (354 aa).

Position 48 (Arg48) interacts with NADP(+). FMN-binding positions include 125–127, Gly277, 292–296, and Arg318; these read RAS and KPIPS.

It belongs to the chorismate synthase family. Homotetramer. FMNH2 serves as cofactor.

It catalyses the reaction 5-O-(1-carboxyvinyl)-3-phosphoshikimate = chorismate + phosphate. It participates in metabolic intermediate biosynthesis; chorismate biosynthesis; chorismate from D-erythrose 4-phosphate and phosphoenolpyruvate: step 7/7. In terms of biological role, catalyzes the anti-1,4-elimination of the C-3 phosphate and the C-6 proR hydrogen from 5-enolpyruvylshikimate-3-phosphate (EPSP) to yield chorismate, which is the branch point compound that serves as the starting substrate for the three terminal pathways of aromatic amino acid biosynthesis. This reaction introduces a second double bond into the aromatic ring system. The protein is Chorismate synthase of Nitratidesulfovibrio vulgaris (strain ATCC 29579 / DSM 644 / CCUG 34227 / NCIMB 8303 / VKM B-1760 / Hildenborough) (Desulfovibrio vulgaris).